A 449-amino-acid chain; its full sequence is NADH-quinone oxidoreductase subunit H (449 aa).

A run of 9 helical transmembrane segments spans residues 26 to 46 (FWLI…MTLF), 96 to 116 (PIFI…FAVI), 136 to 156 (LPVS…GLIL), 177 to 197 (IISY…YAGT), 211 to 231 (WYIA…GETN), 259 to 279 (FFFL…TTLF), 298 to 318 (WVPL…FIWL), 330 to 350 (FMAF…LVIA), and 365 to 385 (WLIG…LDPG). The disordered stretch occupies residues 396–449 (AERRKLAEAPSLESIPWPPPPPGGAHHRPAVPAGTSANGSSTVIPADPPPRQES).

This sequence belongs to the complex I subunit 1 family. As to quaternary structure, NDH-1 is composed of 14 different subunits. Subunits NuoA, H, J, K, L, M, N constitute the membrane sector of the complex.

The protein localises to the cell membrane. It carries out the reaction a quinone + NADH + 5 H(+)(in) = a quinol + NAD(+) + 4 H(+)(out). In terms of biological role, NDH-1 shuttles electrons from NADH, via FMN and iron-sulfur (Fe-S) centers, to quinones in the respiratory chain. The immediate electron acceptor for the enzyme in this species is believed to be ubiquinone. Couples the redox reaction to proton translocation (for every two electrons transferred, four hydrogen ions are translocated across the cytoplasmic membrane), and thus conserves the redox energy in a proton gradient. This subunit may bind ubiquinone. The chain is NADH-quinone oxidoreductase subunit H from Frankia alni (strain DSM 45986 / CECT 9034 / ACN14a).